The chain runs to 523 residues: UDP-N-acetylmuramyl-tripeptide synthetase (523 aa).

S38 provides a ligand contact to UDP-N-acetyl-alpha-D-muramoyl-L-alanyl-D-glutamate. 116 to 122 (GTKGKTT) serves as a coordination point for ATP. UDP-N-acetyl-alpha-D-muramoyl-L-alanyl-D-glutamate is bound by residues 162–163 (TT), S189, and R197. K231 is modified (N6-carboxylysine).

Belongs to the MurCDEF family. MurE subfamily. Post-translationally, carboxylation is probably crucial for Mg(2+) binding and, consequently, for the gamma-phosphate positioning of ATP.

It localises to the cytoplasm. It participates in cell wall biogenesis; peptidoglycan biosynthesis. In terms of biological role, catalyzes the addition of an amino acid to the nucleotide precursor UDP-N-acetylmuramoyl-L-alanyl-D-glutamate (UMAG) in the biosynthesis of bacterial cell-wall peptidoglycan. This Lactobacillus acidophilus (strain ATCC 700396 / NCK56 / N2 / NCFM) protein is UDP-N-acetylmuramyl-tripeptide synthetase.